The chain runs to 481 residues: Aspartyl/glutamyl-tRNA(Asn/Gln) amidotransferase subunit B (481 aa).

It belongs to the GatB/GatE family. GatB subfamily. Heterotrimer of A, B and C subunits.

It carries out the reaction L-glutamyl-tRNA(Gln) + L-glutamine + ATP + H2O = L-glutaminyl-tRNA(Gln) + L-glutamate + ADP + phosphate + H(+). It catalyses the reaction L-aspartyl-tRNA(Asn) + L-glutamine + ATP + H2O = L-asparaginyl-tRNA(Asn) + L-glutamate + ADP + phosphate + 2 H(+). Functionally, allows the formation of correctly charged Asn-tRNA(Asn) or Gln-tRNA(Gln) through the transamidation of misacylated Asp-tRNA(Asn) or Glu-tRNA(Gln) in organisms which lack either or both of asparaginyl-tRNA or glutaminyl-tRNA synthetases. The reaction takes place in the presence of glutamine and ATP through an activated phospho-Asp-tRNA(Asn) or phospho-Glu-tRNA(Gln). The sequence is that of Aspartyl/glutamyl-tRNA(Asn/Gln) amidotransferase subunit B from Ehrlichia ruminantium (strain Gardel).